Here is a 265-residue protein sequence, read N- to C-terminus: Mlc titration factor A (265 aa).

Zn(2+)-binding residues include His-111, His-148, His-152, and Glu-211.

This sequence belongs to the MtfA family. As to quaternary structure, interacts with Mlc. Requires Zn(2+) as cofactor.

It is found in the cytoplasm. Functionally, involved in the modulation of the activity of the glucose-phosphotransferase system (glucose-PTS). Interacts with the transcriptional repressor Mlc, preventing its interaction with DNA and leading to the modulation of expression of genes regulated by Mlc, including ptsG, which encodes the PTS system glucose-specific EIICB component. Shows zinc-dependent metallopeptidase activity. The sequence is that of Mlc titration factor A from Cronobacter sakazakii (strain ATCC BAA-894) (Enterobacter sakazakii).